Here is a 289-residue protein sequence, read N- to C-terminus: Carbonyl reductase [NADPH] 1 (289 aa).

S2 is modified (N-acetylserine). Residue S2 is modified to Phosphoserine. Residues V10 to V34, D63 to I64, and N90 each bind NADP(+). Glutathione-binding positions include F95–L97 and Q106. S140 contacts substrate. Glutathione is bound at residue T193–Y194. Y194 functions as the Proton acceptor in the catalytic mechanism. NADP(+) is bound by residues Y194 to K198 and V231 to T233. K239 carries the post-translational modification N6-1-carboxyethyl lysine.

The protein belongs to the short-chain dehydrogenases/reductases (SDR) family. As to quaternary structure, monomer. In terms of tissue distribution, expressed in kidney (at protein level).

Its subcellular location is the cytoplasm. It catalyses the reaction a secondary alcohol + NADP(+) = a ketone + NADPH + H(+). The enzyme catalyses prostaglandin E1 + NADP(+) = 15-oxoprostaglandin E1 + NADPH + H(+). The catalysed reaction is prostaglandin F2alpha + NADP(+) = prostaglandin E2 + NADPH + H(+). It carries out the reaction prostaglandin D2 + NADP(+) = 15-oxoprostaglandin D2 + NADPH + H(+). It catalyses the reaction prostaglandin E2 + NADP(+) = 15-oxoprostaglandin E2 + NADPH + H(+). The enzyme catalyses prostaglandin F2alpha + NADP(+) = 15-oxoprostaglandin F2alpha + NADPH + H(+). The catalysed reaction is menadione + NADPH + H(+) = menadiol + NADP(+). It carries out the reaction daunorubicin + NADPH + H(+) = 13-dihydrodaunorubicin + NADP(+). It catalyses the reaction S-nitrosoglutathione + NADPH + H(+) = S-(hydroxysulfenamide)glutathione + NADP(+). The enzyme catalyses a primary alcohol + NADP(+) = an aldehyde + NADPH + H(+). The catalysed reaction is cortisol + NADPH + H(+) = 20beta-dihydrocortisol + NADP(+). It carries out the reaction corticosterone + NADPH + H(+) = 20beta-dihydrocorticosterone + NADP(+). NADPH-dependent reductase with broad substrate specificity. Catalyzes the reduction of a wide variety of carbonyl compounds including quinones, prostaglandins, menadione, plus various xenobiotics. Catalyzes the reduction of the antitumor anthracyclines doxorubicin and daunorubicin to the cardiotoxic compounds doxorubicinol and daunorubicinol. Can convert prostaglandin E2 to prostaglandin F2-alpha. Can bind glutathione, which explains its higher affinity for glutathione-conjugated substrates. Catalyzes the reduction of S-nitrosoglutathione. In addition, participates in the glucocorticoid metabolism by catalyzing the NADPH-dependent cortisol/corticosterone into 20beta-dihydrocortisol (20b-DHF) or 20beta-corticosterone (20b-DHB), which are weak agonists of NR3C1 and NR3C2 in adipose tissue. The protein is Carbonyl reductase [NADPH] 1 of Sus scrofa (Pig).